The chain runs to 514 residues: Peptide chain release factor 3 (514 aa).

The 261-residue stretch at 8 to 268 folds into the tr-type G domain; it reads KKRRTFAIIS…TFLKFAPEPH (261 aa). Residues 17-24, 85-89, and 139-142 each bind GTP; these read SHPDAGKT, DTPGH, and NKLD.

Belongs to the TRAFAC class translation factor GTPase superfamily. Classic translation factor GTPase family. PrfC subfamily.

It is found in the cytoplasm. Its function is as follows. Increases the formation of ribosomal termination complexes and stimulates activities of RF-1 and RF-2. It binds guanine nucleotides and has strong preference for UGA stop codons. It may interact directly with the ribosome. The stimulation of RF-1 and RF-2 is significantly reduced by GTP and GDP, but not by GMP. This chain is Peptide chain release factor 3, found in Streptococcus gordonii (strain Challis / ATCC 35105 / BCRC 15272 / CH1 / DL1 / V288).